The primary structure comprises 401 residues: Glycerol-3-phosphate dehydrogenase [NAD(+)] 1 (401 aa).

Residues 40–45 (GSGNWG), F128, K151, and A184 contribute to the NAD(+) site. Position 151 (K151) interacts with substrate. K244 functions as the Proton acceptor in the catalytic mechanism. Positions 309 and 338 each coordinate NAD(+). Substrate is bound at residue 309 to 310 (RN).

This sequence belongs to the NAD-dependent glycerol-3-phosphate dehydrogenase family.

Its subcellular location is the cytoplasm. It catalyses the reaction sn-glycerol 3-phosphate + NAD(+) = dihydroxyacetone phosphate + NADH + H(+). The chain is Glycerol-3-phosphate dehydrogenase [NAD(+)] 1 (GPD1) from Zygosaccharomyces rouxii.